A 247-amino-acid polypeptide reads, in one-letter code: Serine protease 1 (247 aa).

The first 15 residues, methionine 1–alanine 15, serve as a signal peptide directing secretion. A propeptide spans alanine 16–lysine 23 (activation peptide). The Peptidase S1 domain occupies isoleucine 24 to alanine 244. Intrachain disulfides connect cysteine 30–cysteine 160, cysteine 48–cysteine 64, cysteine 139–cysteine 206, cysteine 171–cysteine 185, and cysteine 196–cysteine 220. The active-site Charge relay system is histidine 63. Ca(2+) is bound by residues glutamate 75, asparagine 77, valine 80, and glutamate 85. Residue aspartate 107 is the Charge relay system of the active site. At tyrosine 154 the chain carries Sulfotyrosine. The Charge relay system role is filled by serine 200.

Belongs to the peptidase S1 family. Interacts with SERPINA1. The cofactor is Ca(2+). Occurs in a single-chain form and a two-chain form, produced by proteolytic cleavage after Arg-122. In terms of processing, sulfation at Tyr-154 increases selectivity towards basic versus apolar residues at the P2' position of inhibitors that bind in a substrate-like fashion. Although the increase in selectivity is relatively small, it may facilitate digestion of a broader range of dietary proteins.

It is found in the secreted. Its subcellular location is the extracellular space. It catalyses the reaction Preferential cleavage: Arg-|-Xaa, Lys-|-Xaa.. Its function is as follows. Has activity against the synthetic substrates Boc-Phe-Ser-Arg-Mec, Boc-Leu-Thr-Arg-Mec, Boc-Gln-Ala-Arg-Mec and Boc-Val-Pro-Arg-Mec. The single-chain form is more active than the two-chain form against all of these substrates. The protein is Serine protease 1 of Homo sapiens (Human).